The following is a 76-amino-acid chain: ATP synthase peripheral stalk subunit F6, mitochondrial (76 aa).

N6-acetyllysine is present on residues lysine 9, lysine 14, and lysine 47. Lysine 52 and lysine 67 each carry N6-acetyllysine; alternate. N6-succinyllysine; alternate occurs at positions 52 and 67. The residue at position 73 (lysine 73) is an N6-acetyllysine. Residue serine 76 is modified to Phosphoserine.

It belongs to the eukaryotic ATPase subunit F6 family. As to quaternary structure, component of the ATP synthase complex composed at least of ATP5F1A/subunit alpha, ATP5F1B/subunit beta, ATP5MC1/subunit c (homooctomer), MT-ATP6/subunit a, MT-ATP8/subunit 8, ATP5ME/subunit e, ATP5MF/subunit f, ATP5MG/subunit g, ATP5MK/subunit k, ATP5MJ/subunit j, ATP5F1C/subunit gamma, ATP5F1D/subunit delta, ATP5F1E/subunit epsilon, ATP5PF/subunit F6, ATP5PB/subunit b, ATP5PD/subunit d, ATP5PO/subunit OSCP. ATP synthase complex consists of a soluble F(1) head domain (subunits alpha(3) and beta(3)) - the catalytic core - and a membrane F(0) domain - the membrane proton channel (subunits c, a, 8, e, f, g, k and j). These two domains are linked by a central stalk (subunits gamma, delta, and epsilon) rotating inside the F1 region and a stationary peripheral stalk (subunits F6, b, d, and OSCP).

Its subcellular location is the mitochondrion. It localises to the mitochondrion inner membrane. Its function is as follows. Subunit F6, of the mitochondrial membrane ATP synthase complex (F(1)F(0) ATP synthase or Complex V) that produces ATP from ADP in the presence of a proton gradient across the membrane which is generated by electron transport complexes of the respiratory chain. ATP synthase complex consist of a soluble F(1) head domain - the catalytic core - and a membrane F(1) domain - the membrane proton channel. These two domains are linked by a central stalk rotating inside the F(1) region and a stationary peripheral stalk. During catalysis, ATP synthesis in the catalytic domain of F(1) is coupled via a rotary mechanism of the central stalk subunits to proton translocation. In vivo, can only synthesize ATP although its ATP hydrolase activity can be activated artificially in vitro. Part of the complex F(0) domain. Part of the complex F(0) domain and the peripheric stalk, which acts as a stator to hold the catalytic alpha(3)beta(3) subcomplex and subunit a/ATP6 static relative to the rotary elements. The polypeptide is ATP synthase peripheral stalk subunit F6, mitochondrial (Sus scrofa (Pig)).